A 221-amino-acid polypeptide reads, in one-letter code: Probable transaldolase (221 aa).

Residue lysine 83 is the Schiff-base intermediate with substrate of the active site.

This sequence belongs to the transaldolase family. Type 3B subfamily.

The protein localises to the cytoplasm. The catalysed reaction is D-sedoheptulose 7-phosphate + D-glyceraldehyde 3-phosphate = D-erythrose 4-phosphate + beta-D-fructose 6-phosphate. It participates in carbohydrate degradation; pentose phosphate pathway; D-glyceraldehyde 3-phosphate and beta-D-fructose 6-phosphate from D-ribose 5-phosphate and D-xylulose 5-phosphate (non-oxidative stage): step 2/3. Its function is as follows. Transaldolase is important for the balance of metabolites in the pentose-phosphate pathway. This Herpetosiphon aurantiacus (strain ATCC 23779 / DSM 785 / 114-95) protein is Probable transaldolase.